The primary structure comprises 130 residues: WAP four-disulfide core domain protein 3 (130 aa).

Residues 1 to 16 (MKALLALGFLASWVAA) form the signal peptide. WAP domains are found at residues 17 to 61 (GEHA…RGDI) and 62 to 106 (EGGR…IPGL). 8 disulfides stabilise this stretch: cysteine 25/cysteine 49, cysteine 32/cysteine 53, cysteine 36/cysteine 48, cysteine 42/cysteine 57, cysteine 69/cysteine 94, cysteine 77/cysteine 98, cysteine 81/cysteine 93, and cysteine 87/cysteine 102. Residue asparagine 116 is glycosylated (N-linked (GlcNAc...) asparagine).

It is found in the secreted. This Mus musculus (Mouse) protein is WAP four-disulfide core domain protein 3 (Wfdc3).